Reading from the N-terminus, the 462-residue chain is DEK domain-containing chromatin-associated protein 1 (462 aa).

2 disordered regions span residues 18-91 (AVTE…TQGR) and 212-390 (KETK…RKEL). The segment covering 20 to 32 (TEKDTETKKKDEV) has biased composition (basic and acidic residues). A compositionally biased stretch (acidic residues) spans 33-46 (EKDEAMEEKGEEID). The segment covering 77 to 91 (PRSSGNKPLSITQGR) has biased composition (polar residues). Residues 267–276 (NGEDDVAPEE) are compositionally biased toward acidic residues. Basic and acidic residues-rich tracts occupy residues 277 to 303 (ENNK…TDKK), 312 to 322 (EKPAAEEEKSI), and 347 to 360 (QKVD…EKGK). The Nuclear localization signal signature appears at 344–351 (SKKQKVDK). The 56-residue stretch at 384–439 (EPTRKELHVVVTKILKEVDFNTATLSDILRKLGSHFGIDLMHRKAEVKDIITDAIN) folds into the DEK-C domain. DNA-binding regions lie at residues 402–416 (DFNT…RKLG) and 431–435 (KDIIT). Residues 438-462 (INEMSDDDDEKEEDTEDEGEKEGKD) are disordered. The span at 441–462 (MSDDDDEKEEDTEDEGEKEGKD) shows a compositional bias: acidic residues.

In terms of assembly, found in a mRNA splicing-dependent exon junction complex (EJC). Binds specifically histones H3 and H4.

It localises to the nucleus. It is found in the nucleolus. Functionally, chromatin-associated protein which contributes to the modulation of chromatin structure (such as super-helical structure of DNA) and function. Binds to chromatin of protein-coding genes throughout the genome to regulate nucleosome occupancy and chromatin accessibility, and to modulate the expression of target genes. In Arabidopsis thaliana (Mouse-ear cress), this protein is DEK domain-containing chromatin-associated protein 1.